The chain runs to 638 residues: LIM domain kinase 2 (638 aa).

LIM zinc-binding domains lie at 12 to 63 (CRGC…CHKD) and 72 to 124 (CHGC…CGKC). The PDZ domain occupies 152–239 (LISMPATTEC…TLQLLIEHDP (88 aa)). Position 210 is a phosphothreonine (threonine 210). The disordered stretch occupies residues 255–304 (PHMQSTGHTLMLSTLDTKENQEGTLRRRSLRRSNSISKSPGPSSPKEPLL). The span at 257–269 (MQSTGHTLMLSTL) shows a compositional bias: polar residues. Residues 270-279 (DTKENQEGTL) show a composition bias toward basic and acidic residues. Residues 286–304 (RSNSISKSPGPSSPKEPLL) show a composition bias toward low complexity. Residues serine 293 and serine 298 each carry the phosphoserine modification. A Protein kinase domain is found at 331 to 608 (LIHGEVLGKG…DSFEALSLFL (278 aa)). ATP-binding positions include 337–345 (LGKGFFGQA) and lysine 360. Residue aspartate 451 is part of the active site. Threonine 505 carries the post-translational modification Phosphothreonine; by ROCK1 and CDC42BP.

It belongs to the protein kinase superfamily. TKL Ser/Thr protein kinase family. As to quaternary structure, binds ROCK1 and MARF1. Interacts with NISCH. In terms of processing, phosphorylated on serine and/or threonine residues by ROCK1. Specifically expressed in the testes.

The protein resides in the cytoplasm. It is found in the cytoskeleton. It localises to the spindle. Its subcellular location is the microtubule organizing center. The protein localises to the centrosome. The protein resides in the nucleus. It is found in the perinuclear region. It catalyses the reaction L-seryl-[protein] + ATP = O-phospho-L-seryl-[protein] + ADP + H(+). The catalysed reaction is L-threonyl-[protein] + ATP = O-phospho-L-threonyl-[protein] + ADP + H(+). Functionally, serine/threonine-protein kinase that plays an essential role in the regulation of actin filament dynamics. Acts downstream of several Rho family GTPase signal transduction pathways. Involved in astral microtubule organization and mitotic spindle orientation during early stages of mitosis by mediating phosphorylation of TPPP. Displays serine/threonine-specific phosphorylation of myelin basic protein and histone (MBP) in vitro. Suppresses ciliogenesis via multiple pathways; phosphorylation of CFL1, suppression of directional trafficking of ciliary vesicles to the ciliary base, and by facilitating YAP1 nuclear localization where it acts as a transcriptional corepressor of the TEAD4 target genes AURKA and PLK1. This Mus musculus (Mouse) protein is LIM domain kinase 2 (Limk2).